Consider the following 1050-residue polypeptide: MSAASESKYSTEVLSELLSKLQVADNKDEAASNISTFLNSSIVEHDVPVEFFEDLKKQIQSKDAKVSLAALDAYKHIASTNGLSPSVEPYVVDLVSEVAVKAGDKNKDVQTAASDALLAIASAITPTAVKAILPKLIDNLTNTNKWTEKVAILRAVSQLVDTAKAQIALRMPELIPVLSESMWDTKKEVKEAATATMTKSTETIDNKDIEKFIPQLISCIAKPTEVPETVHLLGATTFVSEVTMATLSIMAPLLSRGLAERDTAIKRKAAVIVDNMCKLVEDPQIVAPFMDKLLPGLKNNFANMADPEAREVTQRALNTLRRVGAVGENDSIPEVSTAGDIDVTLNEFNKLVADKKIAKRFDVALNYIAAIAGDLVDEREIQPEAWLQNVLPFATIFLHEKEAKEIIEEFRKRAIDNIPQPPSFEDEEDEGEDLCNCEFSLAYGAKILLNKTQFRLKRNRRYGLCGPNGAGKSTLMRAIANGQVEGFPTQDECKTVYVEHDIDGTHADTTVVEFVIEDGEVGLTKDVVVDKLREFNFSDEMINMPIQSLSGGWKMKLALARAVLKNADILLLDEPTNHLDTVNVAWLVNYLNTCGITSIIVSHDSGFLDNVTQYIIHYEGFKLRKYKGNLSEFVKKCPSAQSYYELGASDLEFRFPEPGFLEGVKTKQKAIVKVSNMSFQYPGTSKPQIQDINFQCSLSSRIAVIGPNGAGKSTLINVLTGELLPTTGEVYVHENCRIAYIKQHAFAHIDNHLDKTPSEYIQWRFQTGEDRETMDRASRQINEEDEQNMNKIFKIEGTPRRIAGIHARRKFKNSYEYEISWMLGENIGMKNERWVPMMSVDNTWLPRGELMETHAKLVAEVDMKEALASGQFRPLTRKEIEEHCAMLGLDAELVSHSRIRGLSGGQKVKLVLAACTWQRPHLIVLDEPTNYLDRDSLGALSKALKAFEGGIVIITHSAEFTKDLTEEVWAVLDGRMTPSGHNWVQGQGSGPRIEKKDDEEEDKFDAMGNKIAAAKKKKKLSSAELRKKKKERMKKKKELGDAYVSSDEEF.

ADP-binding residues include Val43 and His45. One copy of the HEAT 1 repeat lies at 46–83 (DVPVEFFEDLKKQIQSKDAKVSLAALDAYKHIASTNGL). Ser86 provides a ligand contact to ADP. 6 HEAT repeats span residues 89 to 126 (PYVVDLVSEVAVKAGDKNKDVQTAASDALLAIASAITP), 127 to 165 (TAVKAILPKLIDNLTNTNKWTEKVAILRAVSQLVDTAKA), 169 to 206 (LRMPELIPVLSESMWDTKKEVKEAATATMTKSTETIDN), 208 to 244 (DIEKFIPQLISCIAKPTEVPETVHLLGATTFVSEVTM), 245 to 282 (ATLSIMAPLLSRGLAERDTAIKRKAAVIVDNMCKLVED), and 288 to 326 (PFMDKLLPGLKNNFANMADPEAREVTQRALNTLRRVGAV). Residues Thr395, His399, and Glu400 each coordinate ADP. 2 ABC transporter domains span residues 429–646 (DEGE…YYEL) and 672–998 (VKVS…KKDD). The ADP site is built by Asn708, Glu927, Asn930, and His956. The interval 980 to 1050 (GHNWVQGQGS…DAYVSSDEEF (71 aa)) is disordered. Basic residues predominate over residues 1013 to 1037 (AAKKKKKLSSAELRKKKKERMKKKK).

The protein belongs to the ABC transporter superfamily. ABCF family. EF3 subfamily. In terms of assembly, monomer.

The protein localises to the cytoplasm. It catalyses the reaction ATP + H2O = ADP + phosphate + H(+). The protein operates within protein biosynthesis; polypeptide chain elongation. Functionally, ribosome-dependent ATPase that functions in cytoplasmic translation elongation. Required for the ATP-dependent release of deacylated tRNA from the ribosomal E-site during protein biosynthesis. Stimulates the eEF1A-dependent binding of aminoacyl-tRNA to the ribosomal A-site, which has reduced affinity for tRNA as long as the E-site is occupied. Assists translation termination by stimulating the release of nascent protein from the ribosome by release factors. This chain is Elongation factor 3 (CEF3), found in Candida albicans (strain SC5314 / ATCC MYA-2876) (Yeast).